The chain runs to 228 residues: MEEKKQQNVTIKGTKDGITLHLDDCCSFSELLKELDEKLSTHYYESDGRSLIEVRVKVGNRYLTEVQQEEIRTLIRNKKNLVVESIESDVITKAEAIAWKEETEIVPISKIVRSGQVLHVKGNLLLIGDVNPGGTVIAGGNIFVLGSLRGIAHAGYDGDSEAVIAASIMNPMQLRISDVTMRAPEEKEDGAEAAECAYINENNHIVVDRLQLLTHLRPNLTKLERGIV.

The protein belongs to the MinC family. Interacts with MinD and FtsZ.

Its function is as follows. Cell division inhibitor that blocks the formation of polar Z ring septums. Rapidly oscillates between the poles of the cell to destabilize FtsZ filaments that have formed before they mature into polar Z rings. Prevents FtsZ polymerization. The chain is Probable septum site-determining protein MinC from Bacillus mycoides (strain KBAB4) (Bacillus weihenstephanensis).